Consider the following 300-residue polypeptide: E3 ubiquitin-protein ligase RNF212B (300 aa).

The RING-type zinc-finger motif lies at 6–40 (CNQCFRKDGAHFFVTSCGHIFCKKCVTLEKCAVCG). A coiled-coil region spans residues 88–124 (LIAFYKHRITKLETAMQETQQALVSQDKELSVLRKEN). Disordered regions lie at residues 141–251 (YQGS…HTRV) and 280–300 (PYQQ…TTSR). Positions 155–169 (TSPSQSVTPRPSFQH) are enriched in polar residues. Residues 170–183 (SSQVVSRSSSVESV) are compositionally biased toward low complexity. The span at 191–200 (GSLGQGGRGL) shows a compositional bias: gly residues. Residues 211-234 (NETPSPASTHSLSYRPSSASSGQG) are compositionally biased toward polar residues.

In terms of assembly, homodimer. In terms of processing, autoubiquitinated.

It localises to the chromosome. The catalysed reaction is S-ubiquitinyl-[E2 ubiquitin-conjugating enzyme]-L-cysteine + [acceptor protein]-L-lysine = [E2 ubiquitin-conjugating enzyme]-L-cysteine + N(6)-ubiquitinyl-[acceptor protein]-L-lysine.. It functions in the pathway protein modification; protein ubiquitination. Functionally, ubiquitin E3 ligase that acts as a crucial factor for crossing-over (CO) formation during meiosis. Essential for normal prophase I progression and for ensuring appropriate CO designation in meiosis. Recruits key components of the cross-over machinery either directly ou indirectly, leading to the activation of the MutL-gamma complex. The function of RNF212B in CO designation is dependent on its catalytic activity. The polypeptide is E3 ubiquitin-protein ligase RNF212B (RNF212B) (Pongo abelii (Sumatran orangutan)).